The following is a 311-amino-acid chain: MVLRLSFMGTPDFSVPILQALLDAGHDIAAVYSQPPRPAGRRGLKLIPSPVQNLAKAKSIPVFTPQTLKTAEQQTKFTELAVDVAIVVAYGLLLPKTILETPRFGCFNAHASLLPRWRGAAPIQRAIMAGDKETGMTIMKMDEGLDTGPIALSCAIPITDNTTTNELAHKLSHIGADLMIEMLSALEKGQLKLTAQSGENITYASKIKKEETRIDWTKPAEFIHRYIRALSPFPGCWCNMNIAGREERVKILGSRLTTRPSLEIGRIEKGPDSLLIHCGQGCLEVTYLQRSGGKVLECATFLQGAHISAVF.

Ser-112–Pro-115 provides a ligand contact to (6S)-5,6,7,8-tetrahydrofolate.

Belongs to the Fmt family.

It carries out the reaction L-methionyl-tRNA(fMet) + (6R)-10-formyltetrahydrofolate = N-formyl-L-methionyl-tRNA(fMet) + (6S)-5,6,7,8-tetrahydrofolate + H(+). In terms of biological role, attaches a formyl group to the free amino group of methionyl-tRNA(fMet). The formyl group appears to play a dual role in the initiator identity of N-formylmethionyl-tRNA by promoting its recognition by IF2 and preventing the misappropriation of this tRNA by the elongation apparatus. The protein is Methionyl-tRNA formyltransferase of Bartonella henselae (strain ATCC 49882 / DSM 28221 / CCUG 30454 / Houston 1) (Rochalimaea henselae).